The following is a 260-amino-acid chain: MTLHAQQISLSIGKKQILKDVTFAARAGALSAIVGPNGSGKSTLLKALVAELPSEGQISLNGRLLQDYAAWELASLRGVLPQAAHLAFPFTVLEVVRLGLMAGPEAQNTRLPFEALARVDLEGYAGRSYQELSGGEQQRVQLARVLAQVGAPMREGQPCWLFLDEPVSSLDIAHQLTVMDIARQFADGGGGVVAVMHDLNLTAMYADHVHVMTGGETAGAGTVADVLTDQRLSEVYGCDLRIGKVPADAAVFVLPQTARA.

The ABC transporter domain occupies 3–239 (LHAQQISLSI…QRLSEVYGCD (237 aa)). Residue 35–42 (GPNGSGKS) participates in ATP binding.

The protein belongs to the ABC transporter superfamily. Heme (hemin) importer (TC 3.A.1.14.5) family. In terms of assembly, the complex is composed of two ATP-binding proteins (HmuV), two transmembrane proteins (HmuU) and a solute-binding protein (HmuT).

It localises to the cell inner membrane. Functionally, part of the ABC transporter complex HmuTUV involved in hemin import. Responsible for energy coupling to the transport system. This chain is Hemin import ATP-binding protein HmuV, found in Ruegeria sp. (strain TM1040) (Silicibacter sp.).